The chain runs to 563 residues: Urocanate hydratase (563 aa).

Residues 53 to 54 (GG), Q131, 177 to 179 (GMG), E197, R202, 243 to 244 (NA), 264 to 268 (QTSAH), 274 to 275 (YL), and Y323 contribute to the NAD(+) site. C411 is an active-site residue. G493 is a binding site for NAD(+).

This sequence belongs to the urocanase family. NAD(+) serves as cofactor.

Its subcellular location is the cytoplasm. It catalyses the reaction 4-imidazolone-5-propanoate = trans-urocanate + H2O. It functions in the pathway amino-acid degradation; L-histidine degradation into L-glutamate; N-formimidoyl-L-glutamate from L-histidine: step 2/3. In terms of biological role, catalyzes the conversion of urocanate to 4-imidazolone-5-propionate. In Yersinia enterocolitica serotype O:8 / biotype 1B (strain NCTC 13174 / 8081), this protein is Urocanate hydratase.